A 184-amino-acid chain; its full sequence is Troponin I, slow skeletal muscle (184 aa).

Residue Pro1 is modified to N-acetylproline; partial. Residues 1-45 (PEVERKSKITASRKLLKSLMLAKAKECQQEHEAREAEKVRYLAER) form an involved in binding TNC region. Position 55 is a phosphoserine (Ser55). The tract at residues 94–115 (LKLKVLDLRGKFKRPPLRRVRV) is involved in binding TNC and actin.

It belongs to the troponin I family. Binds to actin and tropomyosin. In the muscle sample, approximately 25% of the chains were blocked. Pro-1 is probably acetylated. In terms of processing, the N-terminus is blocked.

Functionally, troponin I is the inhibitory subunit of troponin, the thin filament regulatory complex which confers calcium-sensitivity to striated muscle actomyosin ATPase activity. In Oryctolagus cuniculus (Rabbit), this protein is Troponin I, slow skeletal muscle (TNNI1).